A 278-amino-acid chain; its full sequence is 4-deoxy-L-threo-5-hexosulose-uronate ketol-isomerase (278 aa).

Zn(2+) contacts are provided by His-196, His-198, Glu-203, and His-245.

This sequence belongs to the KduI family. Requires Zn(2+) as cofactor.

It carries out the reaction 5-dehydro-4-deoxy-D-glucuronate = 3-deoxy-D-glycero-2,5-hexodiulosonate. Its pathway is glycan metabolism; pectin degradation; 2-dehydro-3-deoxy-D-gluconate from pectin: step 4/5. Its function is as follows. Catalyzes the isomerization of 5-dehydro-4-deoxy-D-glucuronate to 3-deoxy-D-glycero-2,5-hexodiulosonate. This is 4-deoxy-L-threo-5-hexosulose-uronate ketol-isomerase from Yersinia enterocolitica serotype O:8 / biotype 1B (strain NCTC 13174 / 8081).